The primary structure comprises 160 residues: CXXC motif containing zinc binding protein (160 aa).

Cys33, Cys36, Cys67, and Cys70 together coordinate Zn(2+). Ser75 is subject to Phosphoserine.

Belongs to the UPF0587 family. In terms of assembly, monomer.

The polypeptide is CXXC motif containing zinc binding protein (Homo sapiens (Human)).